The chain runs to 461 residues: Putative aldehyde dehydrogenase FUS7 (461 aa).

220–225 (GSTTTG) lines the NAD(+) pocket. Catalysis depends on residues Glu-242 and Cys-276.

It belongs to the aldehyde dehydrogenase family.

It carries out the reaction an aldehyde + NAD(+) + H2O = a carboxylate + NADH + 2 H(+). Putative aldehyde dehydrogenase; part of the gene cluster that mediates the biosynthesis of the mycotoxin fusarin C. Within the cluster, FUS1, FUS2, FUS8 and FUS9 are sufficient for fusarin production. The other FUS cluster members are not essential for fusarin C biosynthesis. This is Putative aldehyde dehydrogenase FUS7 from Gibberella fujikuroi (strain CBS 195.34 / IMI 58289 / NRRL A-6831) (Bakanae and foot rot disease fungus).